The following is a 268-amino-acid chain: Tryptophan synthase alpha chain (268 aa).

Residues glutamate 49 and aspartate 60 each act as proton acceptor in the active site.

This sequence belongs to the TrpA family. As to quaternary structure, tetramer of two alpha and two beta chains.

The catalysed reaction is (1S,2R)-1-C-(indol-3-yl)glycerol 3-phosphate + L-serine = D-glyceraldehyde 3-phosphate + L-tryptophan + H2O. Its pathway is amino-acid biosynthesis; L-tryptophan biosynthesis; L-tryptophan from chorismate: step 5/5. Functionally, the alpha subunit is responsible for the aldol cleavage of indoleglycerol phosphate to indole and glyceraldehyde 3-phosphate. The polypeptide is Tryptophan synthase alpha chain (Erwinia tasmaniensis (strain DSM 17950 / CFBP 7177 / CIP 109463 / NCPPB 4357 / Et1/99)).